Consider the following 350-residue polypeptide: Flap endonuclease 1 (350 aa).

The tract at residues 1–101 (MGVNLRELIP…REVEERLRRK (101 aa)) is N-domain. Residues aspartate 30, aspartate 83, glutamate 155, glutamate 157, aspartate 176, aspartate 178, and aspartate 239 each coordinate Mg(2+). The I-domain stretch occupies residues 119–261 (EARKYAMMAA…TALRLVKSLG (143 aa)). The tract at residues 341–349 (RQSRLDMWF) is interaction with PCNA.

Belongs to the XPG/RAD2 endonuclease family. FEN1 subfamily. As to quaternary structure, interacts with PCNA. PCNA stimulates the nuclease activity without altering cleavage specificity. Mg(2+) is required as a cofactor.

Structure-specific nuclease with 5'-flap endonuclease and 5'-3' exonuclease activities involved in DNA replication and repair. During DNA replication, cleaves the 5'-overhanging flap structure that is generated by displacement synthesis when DNA polymerase encounters the 5'-end of a downstream Okazaki fragment. Binds the unpaired 3'-DNA end and kinks the DNA to facilitate 5' cleavage specificity. Cleaves one nucleotide into the double-stranded DNA from the junction in flap DNA, leaving a nick for ligation. Also involved in the base excision repair (BER) pathway. Acts as a genome stabilization factor that prevents flaps from equilibrating into structures that lead to duplications and deletions. Also possesses 5'-3' exonuclease activity on nicked or gapped double-stranded DNA. The protein is Flap endonuclease 1 of Aeropyrum pernix (strain ATCC 700893 / DSM 11879 / JCM 9820 / NBRC 100138 / K1).